We begin with the raw amino-acid sequence, 173 residues long: Nicotinamide-nucleotide adenylyltransferase (173 aa).

Belongs to the archaeal NMN adenylyltransferase family.

Its subcellular location is the cytoplasm. The enzyme catalyses beta-nicotinamide D-ribonucleotide + ATP + H(+) = diphosphate + NAD(+). It functions in the pathway cofactor biosynthesis; NAD(+) biosynthesis; NAD(+) from nicotinamide D-ribonucleotide: step 1/1. This is Nicotinamide-nucleotide adenylyltransferase from Methanosarcina acetivorans (strain ATCC 35395 / DSM 2834 / JCM 12185 / C2A).